Consider the following 514-residue polypeptide: Nitric oxide reductase transcription regulator NorR1 (514 aa).

A 4-aspartylphosphate modification is found at D54. The Sigma-54 factor interaction domain occupies 187 to 416 (IIGQSQAIAG…LEHVISRAAL (230 aa)). ATP contacts are provided by residues 215 to 222 (GETGVGKE) and 287 to 296 (EVGELPLSIQ). Positions 490–509 (WAKAARQLGMDASNLHKLAK) form a DNA-binding region, H-T-H motif.

The protein operates within nitrogen metabolism; nitrate reduction (denitrification) [regulation]. Required for the nitric oxide (NO) induced expression of NO reductase. Not required for expression of 2 other pathway members, nitrate reductase (nirS) and nitrous oxide reductase (nosZ). The protein is Nitric oxide reductase transcription regulator NorR1 (norR1) of Cupriavidus necator (strain ATCC 17699 / DSM 428 / KCTC 22496 / NCIMB 10442 / H16 / Stanier 337) (Ralstonia eutropha).